Reading from the N-terminus, the 241-residue chain is Putative lipoprotein YvcA (241 aa).

The signal sequence occupies residues 1–18 (MKKIIFICFSLLLALTGG). C19 carries N-palmitoyl cysteine lipidation. A lipid anchor (S-diacylglycerol cysteine) is attached at C19. The tract at residues 22–48 (NDNDKNSTNDNKTEAVKPKDMDPKDLP) is disordered. Positions 23-46 (DNDKNSTNDNKTEAVKPKDMDPKD) are enriched in basic and acidic residues.

It is found in the cell membrane. Functionally, required for complex colony architecture. The protein is Putative lipoprotein YvcA (yvcA) of Bacillus subtilis (strain 168).